The following is a 91-amino-acid chain: Small ribosomal subunit protein uS19 (91 aa).

Belongs to the universal ribosomal protein uS19 family.

Its function is as follows. Protein S19 forms a complex with S13 that binds strongly to the 16S ribosomal RNA. The protein is Small ribosomal subunit protein uS19 of Delftia acidovorans (strain DSM 14801 / SPH-1).